Reading from the N-terminus, the 438-residue chain is UDP-N-acetylmuramoylalanine--D-glutamate ligase (438 aa).

Position 112-118 (112-118 (GSNGKST)) interacts with ATP.

This sequence belongs to the MurCDEF family.

It is found in the cytoplasm. It catalyses the reaction UDP-N-acetyl-alpha-D-muramoyl-L-alanine + D-glutamate + ATP = UDP-N-acetyl-alpha-D-muramoyl-L-alanyl-D-glutamate + ADP + phosphate + H(+). Its pathway is cell wall biogenesis; peptidoglycan biosynthesis. Functionally, cell wall formation. Catalyzes the addition of glutamate to the nucleotide precursor UDP-N-acetylmuramoyl-L-alanine (UMA). The polypeptide is UDP-N-acetylmuramoylalanine--D-glutamate ligase (Salmonella typhi).